Here is a 292-residue protein sequence, read N- to C-terminus: Nitrogenase iron protein (292 aa).

10 to 17 provides a ligand contact to ATP; sequence GKGGIGKS. A [4Fe-4S] cluster-binding site is contributed by cysteine 98. Arginine 101 is subject to ADP-ribosylarginine; by dinitrogenase reductase ADP-ribosyltransferase. [4Fe-4S] cluster is bound at residue cysteine 133.

Belongs to the NifH/BchL/ChlL family. As to quaternary structure, homodimer. [4Fe-4S] cluster serves as cofactor. The reversible ADP-ribosylation of Arg-101 inactivates the nitrogenase reductase and regulates nitrogenase activity.

The catalysed reaction is N2 + 8 reduced [2Fe-2S]-[ferredoxin] + 16 ATP + 16 H2O = H2 + 8 oxidized [2Fe-2S]-[ferredoxin] + 2 NH4(+) + 16 ADP + 16 phosphate + 6 H(+). In terms of biological role, the key enzymatic reactions in nitrogen fixation are catalyzed by the nitrogenase complex, which has 2 components: the iron protein and the molybdenum-iron protein. The sequence is that of Nitrogenase iron protein from Teredinibacter turnerae (strain ATCC 39867 / T7901).